Reading from the N-terminus, the 501-residue chain is Lysine--tRNA ligase (501 aa).

Residues Glu402 and Glu409 each coordinate Mg(2+).

It belongs to the class-II aminoacyl-tRNA synthetase family. As to quaternary structure, homodimer. The cofactor is Mg(2+).

Its subcellular location is the cytoplasm. The enzyme catalyses tRNA(Lys) + L-lysine + ATP = L-lysyl-tRNA(Lys) + AMP + diphosphate. The chain is Lysine--tRNA ligase from Helicobacter pylori (strain HPAG1).